A 275-amino-acid chain; its full sequence is Lectin (275 aa).

The N-terminal stretch at 1 to 30 (MASLQTQMISFYAIFLSILLTTILFFKVNS) is a signal peptide. Positions 149 and 151 each coordinate Mn(2+). The Ca(2+) site is built by aspartate 151, phenylalanine 153, asparagine 155, and aspartate 159. Residues aspartate 159 and histidine 166 each coordinate Mn(2+). N-linked (GlcNAc...) asparagine glycosylation is present at asparagine 217.

Belongs to the leguminous lectin family. As to quaternary structure, tetramer of two alpha and two beta chains.

In terms of biological role, D-mannose specific lectin. The sequence is that of Lectin (LECA) from Pisum sativum (Garden pea).